The sequence spans 264 residues: Thiazole synthase (264 aa).

Residue lysine 101 is the Schiff-base intermediate with DXP of the active site. 1-deoxy-D-xylulose 5-phosphate-binding positions include glycine 162, 188–189, and 210–211; these read AG and NT.

The protein belongs to the ThiG family. As to quaternary structure, homotetramer. Forms heterodimers with either ThiH or ThiS.

Its subcellular location is the cytoplasm. The enzyme catalyses [ThiS sulfur-carrier protein]-C-terminal-Gly-aminoethanethioate + 2-iminoacetate + 1-deoxy-D-xylulose 5-phosphate = [ThiS sulfur-carrier protein]-C-terminal Gly-Gly + 2-[(2R,5Z)-2-carboxy-4-methylthiazol-5(2H)-ylidene]ethyl phosphate + 2 H2O + H(+). It functions in the pathway cofactor biosynthesis; thiamine diphosphate biosynthesis. Functionally, catalyzes the rearrangement of 1-deoxy-D-xylulose 5-phosphate (DXP) to produce the thiazole phosphate moiety of thiamine. Sulfur is provided by the thiocarboxylate moiety of the carrier protein ThiS. In vitro, sulfur can be provided by H(2)S. The polypeptide is Thiazole synthase (Chromobacterium violaceum (strain ATCC 12472 / DSM 30191 / JCM 1249 / CCUG 213 / NBRC 12614 / NCIMB 9131 / NCTC 9757 / MK)).